The chain runs to 441 residues: Probable cytosolic Fe-S cluster assembly factor v1g210509 (441 aa).

7 residues coordinate [4Fe-4S] cluster: C24, C72, C75, C78, C196, C252, and C401.

It belongs to the NARF family.

In terms of biological role, component of the cytosolic iron-sulfur (Fe/S) protein assembly machinery. Required for maturation of extramitochondrial Fe/S proteins. In Nematostella vectensis (Starlet sea anemone), this protein is Probable cytosolic Fe-S cluster assembly factor v1g210509.